Reading from the N-terminus, the 1233-residue chain is Anion exchange protein 3 (1233 aa).

Residues 1-11 (MANGVIPPPGG) are compositionally biased toward pro residues. 2 disordered regions span residues 1–320 (MANG…RRPH) and 431–500 (DDKD…DGHR). Residues 1 to 709 (MANGVIPPPG…DLRDALHSQC (709 aa)) lie on the Cytoplasmic side of the membrane. Basic and acidic residues predominate over residues 58–73 (DPEKPSRSFSERDFAF). Composition is skewed to basic residues over residues 74–97 (HRHISHHTHHPLSARLPPPHKLRR) and 104–113 (RHTRRKRKKE). Residues 137 to 153 (GEEEEEEEEEGESETEA) are compositionally biased toward acidic residues. Residues S168, S171, S176, and S199 each carry the phosphoserine modification. Residues 201 to 216 (QRSVSSSSPRARAPRV) show a composition bias toward low complexity. The segment covering 268–290 (DDMKSHRLEDNPGVRRHLVKEPS) has biased composition (basic and acidic residues). R296 bears the Omega-N-methylarginine mark. Residues 437–450 (SFPRNPSSSSVNSV) show a composition bias toward low complexity. Residues 482-500 (HDPDAKERPLHMPGGDGHR) show a composition bias toward basic and acidic residues. A run of 4 helical transmembrane segments spans residues 710 to 732 (VAAVLFIYFAALSPAITFGGLLG), 738 to 775 (LMGVSELIVSTAVLGVLFSLLGAQPLLVVGFSGPLLVF), 795 to 817 (VWVGLWLVVFVLALVGAEGTFLV), and 827 to 848 (IFAFLISLIFIYETFHKLYKVF). The segment at 710–1233 (VAAVLFIYFA…DEYNELHMPV (524 aa)) is membrane (anion exchange). N874 is a glycosylation site (N-linked (GlcNAc...) asparagine). A helical membrane pass occupies residues 894 to 911 (ALLSLILMLGTFLIAFFL). The Cytoplasmic portion of the chain corresponds to 912-926 (RKFRNSRFLGGKARR). The next 5 helical transmembrane spans lie at 927–947 (IIGDFGIPISILLMVLVDYSI), 981–1003 (PFPPWMMVAAAVPALLVLILIFM), 1029–1050 (LLLIGSLGGLCGLFGLPWLTAA), 1084–1129 (VTGV…IQLS), and 1156–1192 (MHLFTCIQLACIALLWVVKSTAASLAFPFLLLLTVPL). Residue C1166 is the site of S-palmitoyl cysteine attachment.

The protein belongs to the anion exchanger (TC 2.A.31) family.

Its subcellular location is the cell membrane. It carries out the reaction hydrogencarbonate(in) + chloride(out) = hydrogencarbonate(out) + chloride(in). Functionally, sodium-independent anion exchanger which mediates the electroneutral exchange of chloride for bicarbonate ions across the cell membrane. May be involved in the regulation of intracellular pH, and the modulation of cardiac action potential. The chain is Anion exchange protein 3 (SLC4A3) from Oryctolagus cuniculus (Rabbit).